Reading from the N-terminus, the 500-residue chain is Na(+)/H(+) antiporter NhaB (500 aa).

The next 12 membrane-spanning stretches (helical) occupy residues 34–54 (PLFF…EFIF), 62–82 (CYPL…GMTT), 90–110 (LVHN…IYFM), 129–149 (ALLG…LDAL), 150–170 (TVTA…HRVA), 205–225 (LLMH…VGEP), 241–261 (FFSK…VTCV), 311–331 (ILIV…LLVI), 350–370 (FKDA…VAVI), 394–414 (MLFI…VATI), 449–469 (VATP…IAPL), and 477–497 (MVWM…YAVS).

This sequence belongs to the NhaB Na(+)/H(+) (TC 2.A.34) antiporter family.

It localises to the cell inner membrane. The enzyme catalyses 2 Na(+)(in) + 3 H(+)(out) = 2 Na(+)(out) + 3 H(+)(in). Functionally, na(+)/H(+) antiporter that extrudes sodium in exchange for external protons. This chain is Na(+)/H(+) antiporter NhaB, found in Pseudomonas fluorescens (strain ATCC BAA-477 / NRRL B-23932 / Pf-5).